Reading from the N-terminus, the 445-residue chain is Na(+)-translocating NADH-quinone reductase subunit A (445 aa).

This sequence belongs to the NqrA family. In terms of assembly, composed of six subunits; NqrA, NqrB, NqrC, NqrD, NqrE and NqrF.

It catalyses the reaction a ubiquinone + n Na(+)(in) + NADH + H(+) = a ubiquinol + n Na(+)(out) + NAD(+). NQR complex catalyzes the reduction of ubiquinone-1 to ubiquinol by two successive reactions, coupled with the transport of Na(+) ions from the cytoplasm to the periplasm. NqrA to NqrE are probably involved in the second step, the conversion of ubisemiquinone to ubiquinol. This is Na(+)-translocating NADH-quinone reductase subunit A from Teredinibacter turnerae (strain ATCC 39867 / T7901).